A 291-amino-acid chain; its full sequence is tRNA-cytidine(32) 2-sulfurtransferase (291 aa).

The PP-loop motif signature appears at 36 to 41 (SGGKDS). 3 residues coordinate [4Fe-4S] cluster: Cys-111, Cys-114, and Cys-202. The segment at 259 to 291 (DPWLDAEDEEAEDCGEPSAGDGVVSLGGARGGR) is disordered. Residues 262 to 273 (LDAEDEEAEDCG) show a composition bias toward acidic residues.

The protein belongs to the TtcA family. In terms of assembly, homodimer. The cofactor is Mg(2+). [4Fe-4S] cluster is required as a cofactor.

The protein localises to the cytoplasm. The enzyme catalyses cytidine(32) in tRNA + S-sulfanyl-L-cysteinyl-[cysteine desulfurase] + AH2 + ATP = 2-thiocytidine(32) in tRNA + L-cysteinyl-[cysteine desulfurase] + A + AMP + diphosphate + H(+). The protein operates within tRNA modification. Its function is as follows. Catalyzes the ATP-dependent 2-thiolation of cytidine in position 32 of tRNA, to form 2-thiocytidine (s(2)C32). The sulfur atoms are provided by the cysteine/cysteine desulfurase (IscS) system. The protein is tRNA-cytidine(32) 2-sulfurtransferase of Anaeromyxobacter sp. (strain K).